The following is a 166-amino-acid chain: Ribosome maturation factor RimM (166 aa).

Residues 91–163 (EDEFYEFQLI…KMQITPPEGW (73 aa)) form the PRC barrel domain.

The protein belongs to the RimM family. In terms of assembly, binds ribosomal protein uS19.

It localises to the cytoplasm. An accessory protein needed during the final step in the assembly of 30S ribosomal subunit, possibly for assembly of the head region. Essential for efficient processing of 16S rRNA. May be needed both before and after RbfA during the maturation of 16S rRNA. It has affinity for free ribosomal 30S subunits but not for 70S ribosomes. The chain is Ribosome maturation factor RimM from Sulfurihydrogenibium sp. (strain YO3AOP1).